Reading from the N-terminus, the 256-residue chain is Follistatin-related protein 3 (256 aa).

A signal peptide spans 1–23 (MRPGALWPLLWGALVWAVGSVGA). The TB domain maps to 34–105 (GVCWLQQGKE…SCDGVECGPG (72 aa)). 8 disulfides stabilise this stretch: Cys-36–Cys-59, Cys-46–Cys-90, Cys-60–Cys-93, Cys-97–Cys-108, Cys-102–Cys-117, Cys-119–Cys-151, Cys-123–Cys-144, and Cys-133–Cys-165. The N-linked (GlcNAc...) asparagine glycan is linked to Asn-71. Positions 97–117 (CDGVECGPGKACRMLGGRPHC) constitute a Follistatin-like 1 domain. 2 Kazal-like domains span residues 111 to 167 (LGGR…RCQK) and 187 to 243 (SAHC…ICTG). Residues 168-191 (SCAQVVCPRPQSCLVDQTGSAHCV) form the Follistatin-like 2 domain. Disulfide bonds link Cys-193/Cys-227, Cys-198/Cys-220, and Cys-209/Cys-241. Asn-213 carries an N-linked (GlcNAc...) asparagine glycan.

Interacts with INHBA and INHBB. Interacts with FN1. Interacts with ADAM12. Interacts with MLLT10; the interaction enhances MLLT10 in vitro transcriptional activity and self-association. Interacts with MSTN.

It localises to the secreted. The protein resides in the nucleus. In terms of biological role, the secreted form is a binding and antagonizing protein for members of the TGF-beta family, such as activin, BMP2 and MSTN. Inhibits activin A-, activin B-, BMP2- and MSDT-induced cellular signaling; more effective on activin A than on activin B. Involved in bone formation; inhibits osteoclast differentiation. Involved in hematopoiesis; involved in differentiation of hemopoietic progenitor cells, increases hematopoietic cell adhesion to fibronectin and seems to contribute to the adhesion of hematopoietic precursor cells to the bone marrow stroma. The nuclear form is probably involved in transcriptional regulation via interaction with MLLT10. This Rattus norvegicus (Rat) protein is Follistatin-related protein 3 (Fstl3).